A 184-amino-acid polypeptide reads, in one-letter code: Photosystem I assembly protein Ycf4 (184 aa).

2 consecutive transmembrane segments (helical) span residues Phe-22 to Ser-42 and Ile-57 to Ser-77.

This sequence belongs to the Ycf4 family.

Its subcellular location is the plastid. It is found in the chloroplast thylakoid membrane. Seems to be required for the assembly of the photosystem I complex. This Phalaenopsis aphrodite subsp. formosana (Moth orchid) protein is Photosystem I assembly protein Ycf4.